The chain runs to 178 residues: FXYD domain-containing ion transport regulator 5 (178 aa).

Residues 1–21 (MSPSGRLCLLTIVGLILPTRG) form the signal peptide. Topologically, residues 22–145 (QTLKDTTSSS…FYDEHTLRKR (124 aa)) are extracellular. The disordered stretch occupies residues 23 to 131 (TLKDTTSSSS…QTLKPSGFHE (109 aa)). Composition is skewed to low complexity over residues 26–36 (DTTSSSSADST) and 68–77 (TPQPQTQTQQ). Over residues 103 to 125 (DTTTLSERPSPSTDVQTDPQTLK) the composition is skewed to polar residues. Residues 146–164 (GLLVAAVLFITGIIILTSG) traverse the membrane as a helical segment. Topologically, residues 165–178 (KCRQLSRLCRNRCR) are cytoplasmic.

It belongs to the FXYD family. In terms of assembly, regulatory subunit of the sodium/potassium-transporting ATPase which is composed of a catalytic alpha subunit, a non-catalytic beta subunit and an additional regulatory subunit. The regulatory subunit, a member of the FXYD protein family, modulates the enzymatic activity in a tissue- and isoform-specific way by changing affinities of the Na+/K+-ATPase toward Na(+), K(+) or ATP. In terms of processing, glycosylated.

It is found in the cell membrane. The protein resides in the basolateral cell membrane. Associates with and regulates the activity of the sodium/potassium-transporting ATPase (NKA) which catalyzes the hydrolysis of ATP coupled with the exchange of Na(+) and K(+) ions across the plasma membrane. May increase NKA activity by increasing the apparent affinity for Na(+). Involved in down-regulation of E-cadherin which results in reduced cell adhesion. Promotes metastasis. The protein is FXYD domain-containing ion transport regulator 5 (FXYD5) of Homo sapiens (Human).